The primary structure comprises 292 residues: Imipenem-hydrolyzing beta-lactamase (292 aa).

The signal sequence occupies residues 1–27 (MSLNVKQSRIAILFSSCLISISFFSQA). An intrachain disulfide couples cysteine 70 to cysteine 240. Residue serine 71 is the Acyl-ester intermediate of the active site. 236–238 (KTG) contacts substrate.

It belongs to the class-A beta-lactamase family.

It catalyses the reaction a beta-lactam + H2O = a substituted beta-amino acid. Hydrolyzes carbapenems such as imipenem, which are extended-spectrum beta-lactam antibiotics. The protein is Imipenem-hydrolyzing beta-lactamase (nmcA) of Enterobacter cloacae.